A 447-amino-acid polypeptide reads, in one-letter code: Gamma-glutamyl phosphate reductase (447 aa).

The protein belongs to the gamma-glutamyl phosphate reductase family.

It localises to the cytoplasm. It catalyses the reaction L-glutamate 5-semialdehyde + phosphate + NADP(+) = L-glutamyl 5-phosphate + NADPH + H(+). It participates in amino-acid biosynthesis; L-proline biosynthesis; L-glutamate 5-semialdehyde from L-glutamate: step 2/2. Catalyzes the NADPH-dependent reduction of L-glutamate 5-phosphate into L-glutamate 5-semialdehyde and phosphate. The product spontaneously undergoes cyclization to form 1-pyrroline-5-carboxylate. The polypeptide is Gamma-glutamyl phosphate reductase (Methanosarcina mazei (strain ATCC BAA-159 / DSM 3647 / Goe1 / Go1 / JCM 11833 / OCM 88) (Methanosarcina frisia)).